The following is a 287-amino-acid chain: Stomatin-like protein 3 (287 aa).

Serine 3 bears the Phosphoserine mark. Residues 25-45 (WILFFLSFLLMLVTFPISVWM) form a helical; Signal-anchor for type III membrane protein membrane-spanning segment. The Cytoplasmic portion of the chain corresponds to 46–287 (CLKIIKEYER…GNNKKVTAKA (242 aa)). Phosphoserine is present on serine 237.

The protein belongs to the band 7/mec-2 family. Homodimer. Interacts with PIEZO1 and PIEZO2. In terms of tissue distribution, expressed by all dorsal root ganglion neurons and is selectively expressed in neuronal tissues. Detected in olfactory epithelium.

It is found in the cell membrane. In terms of biological role, required for the function of many mechanoreceptors. Modulate mechanotransduction channels and acid-sensing ion channels (ASIC) proteins. Potentiates PIEZO1 and PIEZO2 function by increasing their sensitivity to mechanical stimulations. This Mus musculus (Mouse) protein is Stomatin-like protein 3 (Stoml3).